Reading from the N-terminus, the 261-residue chain is High-affinity zinc uptake system membrane protein ZnuB (261 aa).

Topologically, residues 1–7 (MIELLFP) are periplasmic. The helical transmembrane segment at 8-28 (GWLAGIMLACAAGPLGSFVVW) threads the bilayer. The Cytoplasmic segment spans residues 29-53 (RRMSYFGDTLAHASLLGVAFGLLLD). Residues 54–74 (VNPFYAVIAVTLLLAGGLVWL) traverse the membrane as a helical segment. Over 75-83 (EKRPQLAID) the chain is Periplasmic. A helical transmembrane segment spans residues 84–104 (TLLGIMAHSALSLGLVVVSLM). Residues 105–121 (SNIRVDLMAYLFGDLLA) are Cytoplasmic-facing. The chain crosses the membrane as a helical span at residues 122–142 (VTPEDLISIAIGVVIVVAILF). The Periplasmic segment spans residues 143-177 (WQWRNLLSMTISPDLAFVDGVKLQRVKLLLMLVTA). The helical transmembrane segment at 178–198 (LTIGVAMKFVGALIITSLLII) threads the bilayer. At 199-213 (PAATARRFARTPEQM) the chain is on the cytoplasmic side. A helical membrane pass occupies residues 214–234 (AGVAVLVGMVAVTGGLTFSAV). Residue Tyr-235 is a topological domain, periplasmic. Residues 236–256 (DTPAGPSVVLCAALLFILSMM) form a helical membrane-spanning segment. The Cytoplasmic portion of the chain corresponds to 257–261 (KKQAS).

This sequence belongs to the ABC-3 integral membrane protein family.

It localises to the cell inner membrane. In terms of biological role, involved in the high-affinity zinc uptake transport system. This Escherichia coli (strain K12) protein is High-affinity zinc uptake system membrane protein ZnuB (znuB).